The following is a 581-amino-acid chain: Protein LYRIC (581 aa).

At M1–S49 the chain is on the lumenal side. Residues M1 to W71 are activation of NF-kappa-B. Residues W50–G70 form a helical membrane-spanning segment. Over W71–T581 the chain is Cytoplasmic. The segment at A72–S168 is interaction with BCCIP. A disordered region spans residues G77–P221. Positions E100–R204 are interaction with RELA. Residues L108–K126 show a composition bias toward basic and acidic residues. T142 is modified (phosphothreonine). Positions E159 to S168 are enriched in basic residues. S179 carries the post-translational modification Phosphoserine. Residues H197–D207 are compositionally biased toward basic residues. Residues S215 and S250 each carry the phosphoserine modification. An N6-acetyllysine modification is found at K263. The disordered stretch occupies residues V280 to T581. Phosphoserine is present on residues S297, S305, and S310. Over residues Q318–N331 the composition is skewed to polar residues. A phosphoserine mark is found at S343 and S368. Composition is skewed to polar residues over residues E353 to Q371 and N382 to W393. The tract at residues G380–K442 is lung-homing for mammary tumors. 2 positions are modified to phosphoserine: S414 and S425. Over residues D421–E433 the composition is skewed to basic and acidic residues. Positions K440 to K450 are enriched in basic residues. Phosphoserine occurs at positions 456, 477, 493, and 495. Composition is skewed to polar residues over residues P519 to V535 and N548 to S567. S567 carries the post-translational modification Phosphoserine. Residues Q570–T581 are compositionally biased toward basic residues.

As to quaternary structure, interacts with BCCIP, CREBBP/CBP and RELA/p65. Widely expressed, with highest levels in liver, kidney, prostate and small intestine. Not detected in endothelial cells.

It is found in the endoplasmic reticulum membrane. Its subcellular location is the nucleus membrane. The protein localises to the cell junction. The protein resides in the tight junction. It localises to the nucleus. It is found in the nucleolus. Its subcellular location is the cytoplasm. The protein localises to the perinuclear region. Its function is as follows. Down-regulates SLC1A2/EAAT2 promoter activity when expressed ectopically. Activates the nuclear factor kappa-B (NF-kappa-B) transcription factor. Promotes anchorage-independent growth of immortalized melanocytes and astrocytes which is a key component in tumor cell expansion. Promotes lung metastasis and also has an effect on bone and brain metastasis, possibly by enhancing the seeding of tumor cells to the target organ endothelium. Induces chemoresistance. This chain is Protein LYRIC (Mtdh), found in Rattus norvegicus (Rat).